Here is a 1397-residue protein sequence, read N- to C-terminus: ABC transporter B family member 2 (1397 aa).

The segment at M1–G117 is disordered. Residues I24 to E39 are compositionally biased toward acidic residues. Positions D37–N69 form a coiled coil. Composition is skewed to basic and acidic residues over residues N49 to P79 and K107 to G117. A run of 5 helical transmembrane segments spans residues I137 to I157, F191 to L211, F273 to A293, G369 to Y389, and W407 to G427. Positions M140–N438 constitute an ABC transmembrane type-1 1 domain. An ABC transporter 1 domain is found at I474–R710. G509–S516 serves as a coordination point for ATP. 2 disordered regions span residues R710–S744 and G763–K783. Over residues N735–S744 the composition is skewed to low complexity. 6 helical membrane-spanning segments follow: residues F801–I821, L846–F866, L922–S942, L948–F968, G1028–Y1048, and V1101–D1121. Residues F801–K1124 enclose the ABC transmembrane type-1 2 domain. Positions I1159–R1395 constitute an ABC transporter 2 domain. G1194–S1201 contacts ATP.

Belongs to the ABC transporter superfamily. ABCB family. Multidrug resistance exporter (TC 3.A.1.201) subfamily.

Its subcellular location is the membrane. The sequence is that of ABC transporter B family member 2 (abcB2) from Dictyostelium discoideum (Social amoeba).